The primary structure comprises 155 residues: 3-hydroxyacyl-[acyl-carrier-protein] dehydratase FabZ (155 aa).

Residue histidine 61 is part of the active site.

Belongs to the thioester dehydratase family. FabZ subfamily.

It localises to the cytoplasm. It carries out the reaction a (3R)-hydroxyacyl-[ACP] = a (2E)-enoyl-[ACP] + H2O. Functionally, involved in unsaturated fatty acids biosynthesis. Catalyzes the dehydration of short chain beta-hydroxyacyl-ACPs and long chain saturated and unsaturated beta-hydroxyacyl-ACPs. This is 3-hydroxyacyl-[acyl-carrier-protein] dehydratase FabZ from Synechococcus elongatus (strain ATCC 33912 / PCC 7942 / FACHB-805) (Anacystis nidulans R2).